The following is a 254-amino-acid chain: Small ribosomal subunit protein uS5 (254 aa).

Over residues 1–10 (MSAPEAQQQK) the composition is skewed to polar residues. The tract at residues 1-34 (MSAPEAQQQKRGGFGGRNRGRPNRRGPRNTEEKG) is disordered. Position 2 is an N-acetylserine (S2). Residue R11 is modified to Asymmetric dimethylarginine; by HMT1; alternate. R11 bears the Omega-N-methylarginine; by HMT1; alternate mark. Position 17 is an omega-N-methylarginine; by HMT1 (R17). Residues 18-27 (NRGRPNRRGP) show a composition bias toward basic residues. A Glycyl lysine isopeptide (Lys-Gly) (interchain with G-Cter in ubiquitin) cross-link involves residue K33. The S5 DRBM domain occupies 76–139 (LQDEVMNIKP…IIAKLSVIPI (64 aa)).

It belongs to the universal ribosomal protein uS5 family. Component of the small ribosomal subunit (SSU). Mature yeast ribosomes consist of a small (40S) and a large (60S) subunit. The 40S small subunit contains 1 molecule of ribosomal RNA (18S rRNA) and 33 different proteins (encoded by 57 genes). The large 60S subunit contains 3 rRNA molecules (25S, 5.8S and 5S rRNA) and 46 different proteins (encoded by 81 genes). Interacts with snoRNA U3. Interacts with MPP10. Component of the ribosomal small subunit (SSU) processome composed of at least 40 protein subunits and snoRNA U3. N-terminally acetylated by acetyltransferase NatA.

It is found in the cytoplasm. The protein localises to the nucleus. It localises to the nucleolus. In terms of biological role, component of the ribosome, a large ribonucleoprotein complex responsible for the synthesis of proteins in the cell. The small ribosomal subunit (SSU) binds messenger RNAs (mRNAs) and translates the encoded message by selecting cognate aminoacyl-transfer RNA (tRNA) molecules. The large subunit (LSU) contains the ribosomal catalytic site termed the peptidyl transferase center (PTC), which catalyzes the formation of peptide bonds, thereby polymerizing the amino acids delivered by tRNAs into a polypeptide chain. The nascent polypeptides leave the ribosome through a tunnel in the LSU and interact with protein factors that function in enzymatic processing, targeting, and the membrane insertion of nascent chains at the exit of the ribosomal tunnel. uS5 is important for the assembly and function of the 40S ribosomal subunit. Mutations in this protein affects the control of translational fidelity. Involved in nucleolar processing of pre-18S ribosomal RNA and ribosome assembly. This is Small ribosomal subunit protein uS5 from Saccharomyces cerevisiae (strain ATCC 204508 / S288c) (Baker's yeast).